Reading from the N-terminus, the 514-residue chain is Alanine--glyoxylate aminotransferase 2, mitochondrial (514 aa).

Residues 1–41 (MTLIWRHLLRPLCLVTPAPRILEMRPFLNLGASWTSVTKLS) constitute a mitochondrion transit peptide. Lys71 is modified (N6-acetyllysine; alternate). N6-succinyllysine; alternate is present on Lys71. An N6-acetyllysine modification is found at Lys84. An N6-acetyllysine; alternate modification is found at Lys262. An N6-succinyllysine; alternate modification is found at Lys262. An N6-succinyllysine modification is found at Lys304. At Lys350 the chain carries N6-(pyridoxal phosphate)lysine. Lys420 carries the post-translational modification N6-acetyllysine; alternate. At Lys420 the chain carries N6-succinyllysine; alternate.

This sequence belongs to the class-III pyridoxal-phosphate-dependent aminotransferase family. In terms of assembly, homotetramer. The cofactor is pyridoxal 5'-phosphate.

The protein localises to the mitochondrion. The catalysed reaction is glyoxylate + L-alanine = glycine + pyruvate. The enzyme catalyses (R)-3-amino-2-methylpropanoate + pyruvate = 2-methyl-3-oxopropanoate + L-alanine. It carries out the reaction 3-oxopropanoate + L-alanine = beta-alanine + pyruvate. It catalyses the reaction 2-oxobutanoate + L-alanine = (2S)-2-aminobutanoate + pyruvate. The catalysed reaction is N(omega),N(omega)-dimethyl-L-arginine + pyruvate = 5-(3,3-dimethylguanidino)-2-oxopentanoate + L-alanine. The enzyme catalyses N(omega),N('omega)-dimethyl-L-arginine + pyruvate = 5-(3,3'-dimethylguanidino)-2-oxopentanoate + L-alanine. It carries out the reaction N(omega),N(omega)-dimethyl-L-arginine + glyoxylate = 5-(3,3-dimethylguanidino)-2-oxopentanoate + glycine. It catalyses the reaction N(omega),N('omega)-dimethyl-L-arginine + glyoxylate = 5-(3,3'-dimethylguanidino)-2-oxopentanoate + glycine. The catalysed reaction is N(omega)-methyl-L-arginine + pyruvate = 5-(3-methylguanidino)-2-oxopentanoate + L-alanine. The enzyme catalyses N(omega)-methyl-L-arginine + glyoxylate = 5-(3-methylguanidino)-2-oxopentanoate + glycine. It carries out the reaction L-ornithine + pyruvate = 5-amino-2-oxopentanoate + L-alanine. It catalyses the reaction L-ornithine + glyoxylate = 5-amino-2-oxopentanoate + glycine. The catalysed reaction is (2S)-2-aminobutanoate + glyoxylate = 2-oxobutanoate + glycine. The enzyme catalyses N(omega),N(omega)-dimethyl-L-arginine + oxaloacetate = 5-(3,3-dimethylguanidino)-2-oxopentanoate + L-aspartate. It carries out the reaction oxaloacetate + L-alanine = L-aspartate + pyruvate. It catalyses the reaction N(omega),N(omega)-dimethyl-L-arginine + 2-oxobutanoate = 5-(3,3-dimethylguanidino)-2-oxopentanoate + (2S)-2-aminobutanoate. The catalysed reaction is 2-oxopentanoate + N(omega),N(omega)-dimethyl-L-arginine = 5-(3,3-dimethylguanidino)-2-oxopentanoate + L-2-aminopentanoate. The enzyme catalyses 2-oxohexanoate + N(omega),N(omega)-dimethyl-L-arginine = L-2-aminohexanoate + 5-(3,3-dimethylguanidino)-2-oxopentanoate. Functionally, multifunctional aminotransferase with a broad substrate specificity. Catalyzes the conversion of glyoxylate to glycine using alanine as the amino donor. Catalyzes metabolism of not L- but the D-isomer of D-beta-aminoisobutyric acid to generate 2-methyl-3-oxopropanoate and alanine. Catalyzes the transfer of the amino group from beta-alanine to pyruvate to yield L-alanine and 3-oxopropanoate. Can metabolize NG-monomethyl-L-arginine (NMMA), asymmetric NG,NG-dimethyl-L-arginine (ADMA) and symmetric NG,N'G-dimethyl-L-arginine (SDMA). ADMA is a potent inhibitor of nitric-oxide (NO) synthase, and this activity provides mechanism through which the kidney regulates blood pressure. The protein is Alanine--glyoxylate aminotransferase 2, mitochondrial (AGXT2) of Pongo abelii (Sumatran orangutan).